The chain runs to 370 residues: DNA replication and repair protein RecF (370 aa).

Position 30 to 37 (30 to 37) interacts with ATP; it reads GQNGMGKT.

The protein belongs to the RecF family.

Its subcellular location is the cytoplasm. In terms of biological role, the RecF protein is involved in DNA metabolism; it is required for DNA replication and normal SOS inducibility. RecF binds preferentially to single-stranded, linear DNA. It also seems to bind ATP. This is DNA replication and repair protein RecF from Bacteroides fragilis (strain YCH46).